The primary structure comprises 364 residues: Chorismate synthase (364 aa).

Arg47 is an NADP(+) binding site. Residues Arg125–Ser127, Gly285, Lys300–Ser304, and Arg327 contribute to the FMN site.

The protein belongs to the chorismate synthase family. As to quaternary structure, homotetramer. FMNH2 is required as a cofactor.

It carries out the reaction 5-O-(1-carboxyvinyl)-3-phosphoshikimate = chorismate + phosphate. Its pathway is metabolic intermediate biosynthesis; chorismate biosynthesis; chorismate from D-erythrose 4-phosphate and phosphoenolpyruvate: step 7/7. Its function is as follows. Catalyzes the anti-1,4-elimination of the C-3 phosphate and the C-6 proR hydrogen from 5-enolpyruvylshikimate-3-phosphate (EPSP) to yield chorismate, which is the branch point compound that serves as the starting substrate for the three terminal pathways of aromatic amino acid biosynthesis. This reaction introduces a second double bond into the aromatic ring system. This Dehalococcoides mccartyi (strain ATCC BAA-2266 / KCTC 15142 / 195) (Dehalococcoides ethenogenes (strain 195)) protein is Chorismate synthase.